The following is a 282-amino-acid chain: Phosphatidylglycerol--prolipoprotein diacylglyceryl transferase (282 aa).

The next 3 helical transmembrane spans lie at 18–38 (LSIKWYGIIIAVGILIGYFIA), 55–75 (VIFYSAIFGFIAARIYFVIFQ), and 89–109 (IWHGGIAIHGGLLGGFITGII). A 1,2-diacyl-sn-glycero-3-phospho-(1'-sn-glycerol) is bound at residue Arg-137. The next 2 helical transmembrane spans lie at 203 to 223 (VGETFTLYLIWYSIGRFFVEG) and 235 to 255 (IRVAQLVSVILIIIGLVILIY).

Belongs to the Lgt family.

The protein resides in the cell membrane. It catalyses the reaction L-cysteinyl-[prolipoprotein] + a 1,2-diacyl-sn-glycero-3-phospho-(1'-sn-glycerol) = an S-1,2-diacyl-sn-glyceryl-L-cysteinyl-[prolipoprotein] + sn-glycerol 1-phosphate + H(+). It functions in the pathway protein modification; lipoprotein biosynthesis (diacylglyceryl transfer). Functionally, catalyzes the transfer of the diacylglyceryl group from phosphatidylglycerol to the sulfhydryl group of the N-terminal cysteine of a prolipoprotein, the first step in the formation of mature lipoproteins. The sequence is that of Phosphatidylglycerol--prolipoprotein diacylglyceryl transferase from Staphylococcus haemolyticus (strain JCSC1435).